The sequence spans 138 residues: UPF0201 protein TK1335 (138 aa).

It belongs to the UPF0201 family.

In Thermococcus kodakarensis (strain ATCC BAA-918 / JCM 12380 / KOD1) (Pyrococcus kodakaraensis (strain KOD1)), this protein is UPF0201 protein TK1335.